The chain runs to 515 residues: Probable multifunctional siroheme biosynthesis protein HemA (515 aa).

NAD(+)-binding positions include 26-27 and 47-48; these read SL and IR. The glutamyl-tRNA reductase stretch occupies residues 26-174; sequence SLDYKSAAID…TAAKKAKTEI (149 aa). L-glutamyl-tRNA(Glu) is bound by residues 68 to 71, Ser127, Glu132, and Gln138; that span reads TCNR. Cys69 serves as the catalytic Nucleophile. 206–211 contributes to the NADP(+) binding site; that stretch reads GNGEIG. Residues 367 to 507 are precorrin-2 dehydrogenase /sirohydrochlorin ferrochelatase; the sequence is FPLFIDLSGK…SLVKSVAEQI (141 aa).

The protein in the N-terminal section; belongs to the glutamyl-tRNA reductase family. It in the C-terminal section; belongs to the precorrin-2 dehydrogenase / sirohydrochlorin ferrochelatase family. In terms of assembly, homodimer.

The enzyme catalyses (S)-4-amino-5-oxopentanoate + tRNA(Glu) + NADP(+) = L-glutamyl-tRNA(Glu) + NADPH + H(+). It catalyses the reaction precorrin-2 + NAD(+) = sirohydrochlorin + NADH + 2 H(+). The catalysed reaction is siroheme + 2 H(+) = sirohydrochlorin + Fe(2+). It functions in the pathway cofactor biosynthesis; adenosylcobalamin biosynthesis; sirohydrochlorin from precorrin-2: step 1/1. Its pathway is porphyrin-containing compound metabolism; siroheme biosynthesis; siroheme from sirohydrochlorin: step 1/1. It participates in porphyrin-containing compound metabolism; siroheme biosynthesis; sirohydrochlorin from precorrin-2: step 1/1. The protein operates within porphyrin-containing compound metabolism; protoporphyrin-IX biosynthesis; 5-aminolevulinate from L-glutamyl-tRNA(Glu): step 1/2. Its function is as follows. Multifunctional enzyme that catalyzes the NADPH-dependent reduction of glutamyl-tRNA(Glu) to glutamate 1-semialdehyde (GSA), the NAD-dependent ring dehydrogenation of precorrin-2 to sirohydrochlorin and finally, the ferrochelation of sirohydrochlorin to yield siroheme. The sequence is that of Probable multifunctional siroheme biosynthesis protein HemA from Ruminiclostridium josui (Clostridium josui).